Reading from the N-terminus, the 438-residue chain is MPSPPEPPLHWRDCRLEPILGFPRPRELAKSLEVQGEEWIALLESGGGLQHRSRYSFLAWGRRKSSETDAIRAYEELERLADDKCRALPCRSPTFFLVSYEAVVGEEPWLSRLVGRHEWPGMTAFSPEYVVVYDHAGGRVSVCPGDTPLPAPASRKESFSAEGPTYETSRKGFEAMVADALERIRAGEAFQVVLSRVERYRVWGSLFSAYERLADANPSPYLYYARLGGRVIIGSSPELLVKLEAGRVETHPIAGTRPRGSTPIEDIELEVELLNDEKERAEHVMLVDLARNDITRVSIPGTVQVTSFMDIERYETVMHIVSRVEGVTRPSTTFVEALKALHPAGTVSGAPKPRAMEIIAELEEEARGPYAGAIGVAGSSAGEAAIVLRSAWLLDDGETLEARAGAGIVYDSKPEREYMETVQKLGSLKRALGVDMCG.

L-tryptophan contacts are provided by residues Ser45 and 220 to 222 (PYL). 255–256 (GT) is a chorismate binding site. A Mg(2+)-binding site is contributed by Glu282. Chorismate contacts are provided by residues Tyr370, Arg389, 405–407 (GAG), and Gly407. Glu420 contributes to the Mg(2+) binding site.

The protein belongs to the anthranilate synthase component I family. Heterotetramer consisting of two non-identical subunits: a beta subunit (TrpG) and a large alpha subunit (TrpE). Mg(2+) is required as a cofactor.

It carries out the reaction chorismate + L-glutamine = anthranilate + pyruvate + L-glutamate + H(+). It participates in amino-acid biosynthesis; L-tryptophan biosynthesis; L-tryptophan from chorismate: step 1/5. With respect to regulation, feedback inhibited by tryptophan. Functionally, part of a heterotetrameric complex that catalyzes the two-step biosynthesis of anthranilate, an intermediate in the biosynthesis of L-tryptophan. In the first step, the glutamine-binding beta subunit (TrpG) of anthranilate synthase (AS) provides the glutamine amidotransferase activity which generates ammonia as a substrate that, along with chorismate, is used in the second step, catalyzed by the large alpha subunit of AS (TrpE) to produce anthranilate. In the absence of TrpG, TrpE can synthesize anthranilate directly from chorismate and high concentrations of ammonia. The protein is Anthranilate synthase component 1 (trpE) of Aeropyrum pernix (strain ATCC 700893 / DSM 11879 / JCM 9820 / NBRC 100138 / K1).